The following is a 202-amino-acid chain: Holliday junction branch migration complex subunit RuvA (202 aa).

The interval 1 to 63 is domain I; that stretch reads MIEYLKGAIV…EDAHLLYGFS (63 aa). The segment at 64–142 is domain II; the sequence is TKEERTLFGQ…LETSSDEILS (79 aa). The interval 143-153 is flexible linker; the sequence is ARTAVGDAALN. The tract at residues 153 to 202 is domain III; the sequence is NTIASGEEAISALKMLGFADPAIRKAVKSILSEDSSLAVEDIIKRALRML.

The protein belongs to the RuvA family. As to quaternary structure, homotetramer. Forms an RuvA(8)-RuvB(12)-Holliday junction (HJ) complex. HJ DNA is sandwiched between 2 RuvA tetramers; dsDNA enters through RuvA and exits via RuvB. An RuvB hexamer assembles on each DNA strand where it exits the tetramer. Each RuvB hexamer is contacted by two RuvA subunits (via domain III) on 2 adjacent RuvB subunits; this complex drives branch migration. In the full resolvosome a probable DNA-RuvA(4)-RuvB(12)-RuvC(2) complex forms which resolves the HJ.

The protein resides in the cytoplasm. The RuvA-RuvB-RuvC complex processes Holliday junction (HJ) DNA during genetic recombination and DNA repair, while the RuvA-RuvB complex plays an important role in the rescue of blocked DNA replication forks via replication fork reversal (RFR). RuvA specifically binds to HJ cruciform DNA, conferring on it an open structure. The RuvB hexamer acts as an ATP-dependent pump, pulling dsDNA into and through the RuvAB complex. HJ branch migration allows RuvC to scan DNA until it finds its consensus sequence, where it cleaves and resolves the cruciform DNA. This Porphyromonas gingivalis (strain ATCC BAA-308 / W83) protein is Holliday junction branch migration complex subunit RuvA.